A 1947-amino-acid chain; its full sequence is DNA-directed RNA polymerase subunit beta' (1947 aa).

Zn(2+)-binding residues include cysteine 119, cysteine 121, cysteine 141, and cysteine 144. Mg(2+) is bound by residues aspartate 1778, aspartate 1780, and aspartate 1782.

The protein belongs to the RNA polymerase beta' chain family. RpoC1 subfamily. In terms of assembly, in plastids the minimal PEP RNA polymerase catalytic core is composed of four subunits: alpha, beta, beta', and beta''. When a (nuclear-encoded) sigma factor is associated with the core the holoenzyme is formed, which can initiate transcription. Requires Mg(2+) as cofactor. The cofactor is Zn(2+).

The protein resides in the plastid. Its subcellular location is the chloroplast. The enzyme catalyses RNA(n) + a ribonucleoside 5'-triphosphate = RNA(n+1) + diphosphate. Functionally, DNA-dependent RNA polymerase catalyzes the transcription of DNA into RNA using the four ribonucleoside triphosphates as substrates. The chain is DNA-directed RNA polymerase subunit beta' from Oedogonium cardiacum (Filamentous green alga).